Reading from the N-terminus, the 451-residue chain is Tubulin gamma-1 chain (451 aa).

Serine 131 bears the Phosphoserine; by BRSK1 mark. 142–148 (AGGTGSG) provides a ligand contact to GTP.

The protein belongs to the tubulin family. As to quaternary structure, component of the gamma-tubulin ring complex (gTuRC) consisting of TUBGCP2, TUBGCP3, TUBGCP4, TUBGCP5 and TUBGCP6 and gamma-tubulin TUBG1 or TUBG2. TUBGCP2, TUBGCP3, TUBGCP4, TUBGCP5 and TUBGCP6 assemble in a 5:5:2:1:1 stoichiometry; each is associated with a gamma-tubulin, thereby arranging 14 gamma-tubulins in a helical manner. Gamma-tubulin at the first position is blocked by TUBGCP3 at the last position, allowing 13 protafilaments to grow into a microtubule. The gTuRC (via TUBGCP3 and TUBGCP6) interacts with ACTB and MZT1; the interactions form a luminal bridge that stabilizes the initial structure during complex assembly. The gTuRC (via TUBGCP2) interacts with MZT2A/MZT2B and CDK5RAP2 (via CM1 motif); the interactions play a role in gTuRC activation. Interacts with alpha-beta tubulin heterodimers; the interaction allows microtubules to nucleate from the gTuRC. Interacts with B9D2. Interacts with CDK5RAP2; the interaction is leading to centrosomal localization of TUBG1 and CDK5RAP2. Interacts with CIMAP3. Interacts with SAS6 and NUP62 at the centrosome. Interacts with EML3 (phosphorylated at 'Thr-881') and HAUS8. Interacts with DNM2; this interaction may participate in centrosome cohesion. Interacts with CCDC66. In terms of processing, phosphorylation at Ser-131 by BRSK1 regulates centrosome duplication, possibly by mediating relocation of gamma-tubulin and its associated proteins from the cytoplasm to the centrosome.

The protein resides in the cytoplasm. It is found in the cytoskeleton. It localises to the microtubule organizing center. Its subcellular location is the centrosome. The protein localises to the spindle. In terms of biological role, tubulin is the major constituent of microtubules, protein filaments consisting of alpha- and beta-tubulin heterodimers. Gamma-tubulin is a key component of the gamma-tubulin ring complex (gTuRC) which mediates microtubule nucleation. The gTuRC regulates the minus-end nucleation of alpha-beta tubulin heterodimers that grow into microtubule protafilaments, a critical step in centrosome duplication and spindle formation. In Homo sapiens (Human), this protein is Tubulin gamma-1 chain.